Reading from the N-terminus, the 106-residue chain is NADH-quinone oxidoreductase subunit K (106 aa).

3 consecutive transmembrane segments (helical) span residues 8 to 28 (IGIENYIYLCVVLFCIGIFGV), 35 to 55 (IIMFMSIEIMLNAVNLLFVAF), and 66 to 86 (VFVFFSMAVAAAEVAVGLAIL).

It belongs to the complex I subunit 4L family. As to quaternary structure, NDH-1 is composed of 14 different subunits. Subunits NuoA, H, J, K, L, M, N constitute the membrane sector of the complex.

The protein localises to the cell inner membrane. It catalyses the reaction a quinone + NADH + 5 H(+)(in) = a quinol + NAD(+) + 4 H(+)(out). Functionally, NDH-1 shuttles electrons from NADH, via FMN and iron-sulfur (Fe-S) centers, to quinones in the respiratory chain. The immediate electron acceptor for the enzyme in this species is believed to be a menaquinone. Couples the redox reaction to proton translocation (for every two electrons transferred, four hydrogen ions are translocated across the cytoplasmic membrane), and thus conserves the redox energy in a proton gradient. This chain is NADH-quinone oxidoreductase subunit K, found in Flavobacterium psychrophilum (strain ATCC 49511 / DSM 21280 / CIP 103535 / JIP02/86).